The sequence spans 218 residues: Probable GTP-binding protein EngB (218 aa).

Residues 31-205 enclose the EngB-type G domain; it reads SGIEIAFAGR…EQKVTSWYAQ (175 aa). GTP is bound by residues 39-46, 66-70, 84-87, 151-154, and 184-186; these read GRSNAGKS, GRTQL, DLPG, TKAD, and FSS. Mg(2+) is bound by residues serine 46 and threonine 68.

It belongs to the TRAFAC class TrmE-Era-EngA-EngB-Septin-like GTPase superfamily. EngB GTPase family. Mg(2+) serves as cofactor.

Necessary for normal cell division and for the maintenance of normal septation. This Psychromonas ingrahamii (strain DSM 17664 / CCUG 51855 / 37) protein is Probable GTP-binding protein EngB.